A 363-amino-acid chain; its full sequence is Dihydroorotate dehydrogenase (quinone) (363 aa).

FMN contacts are provided by residues 67-71 (AGFDK) and Thr-91. Position 71 (Lys-71) interacts with substrate. 116-120 (NRMGF) contacts substrate. Residues Asn-156 and Asn-189 each coordinate FMN. Residue Asn-189 participates in substrate binding. Ser-192 serves as the catalytic Nucleophile. Asn-194 serves as a coordination point for substrate. The FMN site is built by Lys-231 and Thr-259. 260–261 (NT) provides a ligand contact to substrate. Residues Gly-287, Gly-316, and 337 to 338 (YT) each bind FMN.

This sequence belongs to the dihydroorotate dehydrogenase family. Type 2 subfamily. In terms of assembly, monomer. The cofactor is FMN.

It is found in the cell membrane. It catalyses the reaction (S)-dihydroorotate + a quinone = orotate + a quinol. It participates in pyrimidine metabolism; UMP biosynthesis via de novo pathway; orotate from (S)-dihydroorotate (quinone route): step 1/1. Functionally, catalyzes the conversion of dihydroorotate to orotate with quinone as electron acceptor. The polypeptide is Dihydroorotate dehydrogenase (quinone) (Kocuria rhizophila (strain ATCC 9341 / DSM 348 / NBRC 103217 / DC2201)).